The primary structure comprises 196 residues: ATP-dependent Clp protease proteolytic subunit (196 aa).

Ser-99 acts as the Nucleophile in catalysis. The active site involves His-124.

Belongs to the peptidase S14 family. Fourteen ClpP subunits assemble into 2 heptameric rings which stack back to back to give a disk-like structure with a central cavity, resembling the structure of eukaryotic proteasomes.

It localises to the cytoplasm. The enzyme catalyses Hydrolysis of proteins to small peptides in the presence of ATP and magnesium. alpha-casein is the usual test substrate. In the absence of ATP, only oligopeptides shorter than five residues are hydrolyzed (such as succinyl-Leu-Tyr-|-NHMec, and Leu-Tyr-Leu-|-Tyr-Trp, in which cleavage of the -Tyr-|-Leu- and -Tyr-|-Trp bonds also occurs).. In terms of biological role, cleaves peptides in various proteins in a process that requires ATP hydrolysis. Has a chymotrypsin-like activity. Plays a major role in the degradation of misfolded proteins. This chain is ATP-dependent Clp protease proteolytic subunit, found in Helicobacter pylori (strain ATCC 700392 / 26695) (Campylobacter pylori).